A 671-amino-acid chain; its full sequence is Acetyl-coenzyme A synthetase 1 (671 aa).

CoA contacts are provided by residues 210 to 213 and Thr329; that span reads RGGK. ATP contacts are provided by residues 405–407, 429–434, Asp520, and Arg535; these read GEP and DTYWQT. Residue Ser543 participates in CoA binding. Arg546 contributes to the ATP binding site. Residue Arg605 coordinates CoA.

Belongs to the ATP-dependent AMP-binding enzyme family.

The enzyme catalyses acetate + ATP + CoA = acetyl-CoA + AMP + diphosphate. This Debaryomyces hansenii (strain ATCC 36239 / CBS 767 / BCRC 21394 / JCM 1990 / NBRC 0083 / IGC 2968) (Yeast) protein is Acetyl-coenzyme A synthetase 1 (ACS1).